The following is a 735-amino-acid chain: Stonin-1 (735 aa).

Positions 1 to 35 (MCSTNPGKWVTFDDDPAVQSSQKSKNFPLENQGVC) are disordered. In terms of domain architecture, SHD spans 275–408 (GWSFMLRIPE…KLPAVSKPKK (134 aa)). An MHD domain is found at 412-715 (EQEISLEIVD…ACYNIQVEIE (304 aa)).

The protein belongs to the Stoned B family. As to expression, ubiquitous.

It localises to the cytoplasm. The protein localises to the membrane. Its function is as follows. May be involved in the endocytic machinery. This Homo sapiens (Human) protein is Stonin-1 (STON1).